The following is a 340-amino-acid chain: Putative phosphatidylcholine:ceramide cholinephosphotransferase 3 (340 aa).

The interval 1–25 is disordered; that stretch reads MGSVSKTVISARGASPDDEQNGTKN. 4 helical membrane-spanning segments follow: residues 36–56, 81–101, 178–198, and 202–222; these read CIFL…VLAY, SSLG…LLVI, LLFS…AYYL, and IKPL…CMTI. Residue H183 is part of the active site. Residues 223–340 lie on the Cytoplasmic side of the membrane; it reads SRTHYTIDVV…SSSSTYPLPC (118 aa). Residues H226 and D230 contribute to the active site. A disordered region spans residues 294–313; that stretch reads STPRGQERGGASAESSDSSV.

The protein belongs to the sphingomyelin synthase family.

Its subcellular location is the membrane. The enzyme catalyses an N-acyl-sphingoid base + a 1,2-diacyl-sn-glycero-3-phosphocholine = an N-(acyl)-sphingosylphosphocholine + a 1,2-diacyl-sn-glycerol. It catalyses the reaction an N-acylsphing-4-enine + a 1,2-diacyl-sn-glycero-3-phosphocholine = a sphingomyelin + a 1,2-diacyl-sn-glycerol. The catalysed reaction is an N-acyl-15-methylhexadecasphing-4-enine + a 1,2-diacyl-sn-glycero-3-phosphocholine = an N-acyl-15-methylhexadecasphing-4-enine-1-phosphocholine + a 1,2-diacyl-sn-glycerol. It functions in the pathway lipid metabolism; sphingolipid metabolism. Functionally, bidirectional lipid cholinephosphotransferase capable of converting phosphatidylcholine (PC) and ceramide to sphingomyelin (SM) and diacylglycerol (DAG) and vice versa. Direction is dependent on the relative concentrations of DAG and ceramide as phosphocholine acceptors. Directly and specifically recognizes the choline head group on the substrate. Also requires two fatty chains on the choline-P donor molecule in order to be recognized efficiently as a substrate. Does not function strictly as a SM synthase. C.elegans contains specific sphingoid bases, which are unique or different in structure compared to the sphingoid bases found in other animals. Two examples of these distinctive compounds are: 15-methylhexadecasphinganine and 15-methylhexadecasphing-4-enine. The sequence is that of Putative phosphatidylcholine:ceramide cholinephosphotransferase 3 (sms-3) from Caenorhabditis elegans.